Reading from the N-terminus, the 234-residue chain is Gem-associated protein 8 (234 aa).

Residues 60 to 116 (LAQSPAAKGGTSPKSRSKSPSASGDACRRRSRPGKPGPQRRSTEKPARFAEDNDSES) form a disordered region. Residues 67 to 83 (KGGTSPKSRSKSPSASG) are compositionally biased toward low complexity. Positions 100-110 (RSTEKPARFAE) are enriched in basic and acidic residues. The stretch at 130–153 (ITDELRQYFAETEQHREELRRQHQ) forms a coiled coil.

Part of the core SMN complex that contains SMN1, GEMIN2/SIP1, DDX20/GEMIN3, GEMIN4, GEMIN5, GEMIN6, GEMIN7, GEMIN8 and STRAP/UNRIP. Part of the SMN-Sm complex that contains SMN1, GEMIN2/SIP1, DDX20/GEMIN3, GEMIN4, GEMIN5, GEMIN6, GEMIN7, GEMIN8, STRAP/UNRIP and the Sm proteins SNRPB, SNRPD1, SNRPD2, SNRPD3, SNRPE, SNRPF and SNRPG. Interacts with GEMIN6; the interaction is direct. Interacts with GEMIN7; the interaction is direct. Interacts with SMN1; the interaction is direct. Interacts with GEMIN4; the interaction is direct.

It localises to the nucleus. It is found in the gem. The protein localises to the cytoplasm. The SMN complex catalyzes the assembly of small nuclear ribonucleoproteins (snRNPs), the building blocks of the spliceosome, and thereby plays an important role in the splicing of cellular pre-mRNAs. Most spliceosomal snRNPs contain a common set of Sm proteins SNRPB, SNRPD1, SNRPD2, SNRPD3, SNRPE, SNRPF and SNRPG that assemble in a heptameric protein ring on the Sm site of the small nuclear RNA to form the core snRNP (Sm core). In the cytosol, the Sm proteins SNRPD1, SNRPD2, SNRPE, SNRPF and SNRPG are trapped in an inactive 6S pICln-Sm complex by the chaperone CLNS1A that controls the assembly of the core snRNP. To assemble core snRNPs, the SMN complex accepts the trapped 5Sm proteins from CLNS1A forming an intermediate. Binding of snRNA inside 5Sm triggers eviction of the SMN complex, thereby allowing binding of SNRPD3 and SNRPB to complete assembly of the core snRNP. This is Gem-associated protein 8 (GEMIN8) from Bos taurus (Bovine).